Here is a 273-residue protein sequence, read N- to C-terminus: Dermonecrotic toxin LapSicTox-alphaIB1aiv (273 aa).

His5 is a catalytic residue. Mg(2+)-binding residues include Glu25 and Asp27. The active-site Nucleophile is the His41. Cystine bridges form between Cys45/Cys51 and Cys47/Cys190. Position 85 (Asp85) interacts with Mg(2+). An N-linked (GlcNAc...) asparagine glycan is attached at Asn250.

Belongs to the arthropod phospholipase D family. Class II subfamily. Mg(2+) is required as a cofactor. Expressed by the venom gland.

The protein localises to the secreted. It catalyses the reaction an N-(acyl)-sphingosylphosphocholine = an N-(acyl)-sphingosyl-1,3-cyclic phosphate + choline. The catalysed reaction is an N-(acyl)-sphingosylphosphoethanolamine = an N-(acyl)-sphingosyl-1,3-cyclic phosphate + ethanolamine. It carries out the reaction a 1-acyl-sn-glycero-3-phosphocholine = a 1-acyl-sn-glycero-2,3-cyclic phosphate + choline. The enzyme catalyses a 1-acyl-sn-glycero-3-phosphoethanolamine = a 1-acyl-sn-glycero-2,3-cyclic phosphate + ethanolamine. Dermonecrotic toxins cleave the phosphodiester linkage between the phosphate and headgroup of certain phospholipids (sphingolipid and lysolipid substrates), forming an alcohol (often choline) and a cyclic phosphate. This toxin acts on sphingomyelin (SM). It may also act on ceramide phosphoethanolamine (CPE), lysophosphatidylcholine (LPC) and lysophosphatidylethanolamine (LPE), but not on lysophosphatidylserine (LPS), and lysophosphatidylglycerol (LPG). It acts by transphosphatidylation, releasing exclusively cyclic phosphate products as second products. Induces dermonecrosis, hemolysis, increased vascular permeability, edema, inflammatory response, and platelet aggregation. The protein is Dermonecrotic toxin LapSicTox-alphaIB1aiv of Loxosceles apachea (Apache recluse spider).